A 130-amino-acid chain; its full sequence is uncharacterized protein (130 aa).

Disordered regions lie at residues Met1–Thr47 and Gln78–Ser130. Residues Gln13–Ser33 are compositionally biased toward polar residues. Over residues Pro86–Thr110 the composition is skewed to basic residues. Basic and acidic residues predominate over residues Ser117–Ser130.

This is an uncharacterized protein from Torque teno mini virus 1 (isolate TLMV-CBD279).